Here is an 84-residue protein sequence, read N- to C-terminus: uncharacterized protein (84 aa).

Positions 5–31 (KIQEIINELDNLMNRERKYIELVATVE) form a coiled coil.

This is an uncharacterized protein from Methanocaldococcus jannaschii (strain ATCC 43067 / DSM 2661 / JAL-1 / JCM 10045 / NBRC 100440) (Methanococcus jannaschii).